Here is a 95-residue protein sequence, read N- to C-terminus: MDPQARPQSSLLTAAPELSPLEQEVLDEYERLSENMKKLAVLLDELASAPATEILDGLRELERKTSLVFTLLKASVYSIVLQQEIDWGGGAGDGH.

It belongs to the DASH complex DAD3 family. Component of the DASH complex consisting of ASK1, DAD1, DAD2, DAD3, DAD4, DAM1, DUO1, HSK3, SPC19 and SPC34, with a stoichiometry of one copy of each subunit per complex. Multiple DASH complexes oligomerize to form a ring that encircles spindle microtubules and organizes the rod-like NDC80 complexes of the outer kinetochore. DASH complex oligomerization strengthens microtubule attachments. On cytoplasmic microtubules, DASH complexes appear to form patches instead of rings.

The protein resides in the chromosome. It is found in the centromere. The protein localises to the kinetochore. It localises to the cytoplasm. Its subcellular location is the cytoskeleton. The protein resides in the spindle. It is found in the nucleus. In terms of biological role, component of the DASH complex that connects microtubules with kinetochores and couples microtubule depolymerisation to chromosome movement; it is involved in retrieving kinetochores to the spindle poles before their re-orientation on the spindle in early mitosis and allows microtubule depolymerization to pull chromosomes apart and resist detachment during anaphase. Kinetochores, consisting of a centromere-associated inner segment and a microtubule-contacting outer segment, play a crucial role in chromosome segregation by mediating the physical connection between centromeric DNA and microtubules. Kinetochores also serve as an input point for the spindle assembly checkpoint, which delays anaphase until all chromosomes have bioriented on the mitotic spindle. This Chaetomium thermophilum (strain DSM 1495 / CBS 144.50 / IMI 039719) (Thermochaetoides thermophila) protein is DASH complex subunit DAD3.